The sequence spans 148 residues: Ribose-5-P isomerase B (148 aa).

D-ribulose 5-phosphate is bound at residue 8–9; that stretch reads DE. Catalysis depends on Cys65, which acts as the Proton acceptor. D-ribulose 5-phosphate is bound by residues 66 to 70, Asn99, Arg132, and Lys136; that span reads GTGIG.

This sequence belongs to the LacAB/RpiB family.

The catalysed reaction is aldehydo-D-ribose 5-phosphate = D-ribulose 5-phosphate. It functions in the pathway carbohydrate degradation; pentose phosphate pathway; D-ribose 5-phosphate from D-ribulose 5-phosphate (non-oxidative stage): step 1/1. Catalyzes the interconversion of ribulose-5-P and ribose-5-P. The sequence is that of Ribose-5-P isomerase B from Listeria innocua serovar 6a (strain ATCC BAA-680 / CLIP 11262).